Here is a 725-residue protein sequence, read N- to C-terminus: Endoglucanase G (725 aa).

A signal peptide spans 1-35 (MLKTKRKLTKAIGVALSISILSSLVSFIPQTNTYA). Asp93 serves as the catalytic Nucleophile. Catalysis depends on residues His408, Asp446, and Glu455. The CBM3 domain occupies 489 to 650 (ITNDEVIIKA…GVKVFGNEPA (162 aa)). Residues 658 to 724 (PEILYGDVNS…LLGTITQLPQ (67 aa)) enclose the Dockerin domain.

It belongs to the glycosyl hydrolase 9 (cellulase E) family.

The enzyme catalyses Endohydrolysis of (1-&gt;4)-beta-D-glucosidic linkages in cellulose, lichenin and cereal beta-D-glucans.. Its pathway is glycan metabolism; cellulose degradation. Its function is as follows. The biological conversion of cellulose to glucose generally requires three types of hydrolytic enzymes: (1) Endoglucanases which cut internal beta-1,4-glucosidic bonds; (2) Exocellobiohydrolases that cut the disaccharide cellobiose from the non-reducing end of the cellulose polymer chain; (3) Beta-1,4-glucosidases which hydrolyze the cellobiose and other short cello-oligosaccharides to glucose. The sequence is that of Endoglucanase G (celCCG) from Ruminiclostridium cellulolyticum (strain ATCC 35319 / DSM 5812 / JCM 6584 / H10) (Clostridium cellulolyticum).